The following is a 284-amino-acid chain: Bifunctional protein FolD (284 aa).

NADP(+) contacts are provided by residues 165 to 167, serine 190, and isoleucine 231; that span reads GRS.

This sequence belongs to the tetrahydrofolate dehydrogenase/cyclohydrolase family. Homodimer.

It carries out the reaction (6R)-5,10-methylene-5,6,7,8-tetrahydrofolate + NADP(+) = (6R)-5,10-methenyltetrahydrofolate + NADPH. It catalyses the reaction (6R)-5,10-methenyltetrahydrofolate + H2O = (6R)-10-formyltetrahydrofolate + H(+). The protein operates within one-carbon metabolism; tetrahydrofolate interconversion. Functionally, catalyzes the oxidation of 5,10-methylenetetrahydrofolate to 5,10-methenyltetrahydrofolate and then the hydrolysis of 5,10-methenyltetrahydrofolate to 10-formyltetrahydrofolate. The chain is Bifunctional protein FolD from Dechloromonas aromatica (strain RCB).